The following is a 287-amino-acid chain: Eukaryotic translation initiation factor 3 subunit F (287 aa).

The 131-residue stretch at 12–142 folds into the MPN domain; that stretch reads VRVHPVVLFQ…IKAYVCVSLG (131 aa).

Belongs to the eIF-3 subunit F family. In terms of assembly, component of the eukaryotic translation initiation factor 3 (eIF-3) complex.

It localises to the cytoplasm. Component of the eukaryotic translation initiation factor 3 (eIF-3) complex, which is involved in protein synthesis of a specialized repertoire of mRNAs and, together with other initiation factors, stimulates binding of mRNA and methionyl-tRNAi to the 40S ribosome. The eIF-3 complex specifically targets and initiates translation of a subset of mRNAs involved in cell proliferation. The polypeptide is Eukaryotic translation initiation factor 3 subunit F (Culex quinquefasciatus (Southern house mosquito)).